We begin with the raw amino-acid sequence, 240 residues long: Large ribosomal subunit protein uL2 (240 aa).

Positions 200–240 (HPFGGGGRQHPGKPKSISRNAPPGRKVGDIASKRTGRGGNE) are disordered.

Belongs to the universal ribosomal protein uL2 family. In terms of assembly, part of the 50S ribosomal subunit. Forms a bridge to the 30S subunit in the 70S ribosome. Interacts weakly with protein L37Ae.

Functionally, one of the primary rRNA binding proteins. Required for association of the 30S and 50S subunits to form the 70S ribosome, for tRNA binding and peptide bond formation. It has been suggested to have peptidyltransferase activity; this is somewhat controversial. Makes several contacts with the 16S rRNA in the 70S ribosome. This is Large ribosomal subunit protein uL2 (rpl2) from Haloarcula marismortui (strain ATCC 43049 / DSM 3752 / JCM 8966 / VKM B-1809) (Halobacterium marismortui).